The chain runs to 599 residues: Serine/threonine-protein kinase Nek1 (599 aa).

Positions 4–258 constitute a Protein kinase domain; it reads YEVLEQIGKG…AAELLKHPHL (255 aa). Residues 10 to 18 and K33 each bind ATP; that span reads IGKGAFGSA. Residue D129 is the Proton acceptor of the active site. 3 disordered regions span residues 364–386, 461–482, and 504–542; these read SIVK…EPPK, SEDP…PQHC, and DDDD…DTSS. A compositionally biased stretch (low complexity) spans 511 to 530; it reads DSSSGRNNAAAAASSRAGSS.

It belongs to the protein kinase superfamily. NEK Ser/Thr protein kinase family. NIMA subfamily. In terms of tissue distribution, expressed in anthers, pistils and leaves.

The catalysed reaction is L-seryl-[protein] + ATP = O-phospho-L-seryl-[protein] + ADP + H(+). It catalyses the reaction L-threonyl-[protein] + ATP = O-phospho-L-threonyl-[protein] + ADP + H(+). Functionally, may be involved in plant development processes. The sequence is that of Serine/threonine-protein kinase Nek1 from Oryza sativa subsp. japonica (Rice).